The following is a 305-amino-acid chain: Aspartate carbamoyltransferase catalytic subunit (305 aa).

Carbamoyl phosphate-binding residues include arginine 60 and threonine 61. Residue lysine 88 participates in L-aspartate binding. Residues arginine 110, histidine 138, and glutamine 141 each coordinate carbamoyl phosphate. L-aspartate-binding residues include arginine 171 and arginine 222. Alanine 263 and proline 264 together coordinate carbamoyl phosphate.

The protein belongs to the aspartate/ornithine carbamoyltransferase superfamily. ATCase family. Heterododecamer (2C3:3R2) of six catalytic PyrB chains organized as two trimers (C3), and six regulatory PyrI chains organized as three dimers (R2).

It carries out the reaction carbamoyl phosphate + L-aspartate = N-carbamoyl-L-aspartate + phosphate + H(+). It participates in pyrimidine metabolism; UMP biosynthesis via de novo pathway; (S)-dihydroorotate from bicarbonate: step 2/3. Catalyzes the condensation of carbamoyl phosphate and aspartate to form carbamoyl aspartate and inorganic phosphate, the committed step in the de novo pyrimidine nucleotide biosynthesis pathway. The polypeptide is Aspartate carbamoyltransferase catalytic subunit (Halalkalibacterium halodurans (strain ATCC BAA-125 / DSM 18197 / FERM 7344 / JCM 9153 / C-125) (Bacillus halodurans)).